We begin with the raw amino-acid sequence, 94 residues long: Small ribosomal subunit protein uS19m (94 aa).

Belongs to the universal ribosomal protein uS19 family.

It is found in the mitochondrion. This chain is Small ribosomal subunit protein uS19m (RPS19), found in Petunia hybrida (Petunia).